A 430-amino-acid chain; its full sequence is Aspartate aminotransferase, mitochondrial (430 aa).

Residues 1-29 constitute a mitochondrion transit peptide; it reads MALLHSGRVLSGMAAAFHPGLAAAASARA. Threonine 48 carries the phosphothreonine modification. An N6-acetyllysine modification is found at lysine 59. Residue glycine 65 coordinates substrate. Lysine 73 is subject to N6-acetyllysine; alternate. Lysine 73 bears the N6-succinyllysine; alternate mark. Lysine 82 is modified (N6-acetyllysine). Residue lysine 90 is modified to N6-acetyllysine; alternate. N6-succinyllysine; alternate is present on lysine 90. Tyrosine 96 is subject to 3'-nitrotyrosine; alternate. Tyrosine 96 carries the post-translational modification Phosphotyrosine; alternate. N6-acetyllysine; alternate is present on residues lysine 107 and lysine 122. Lysine 107 and lysine 122 each carry N6-succinyllysine; alternate. Serine 143 bears the Phosphoserine mark. Lysine 159 bears the N6-acetyllysine; alternate mark. Lysine 159 is modified (N6-succinyllysine; alternate). Substrate is bound at residue tryptophan 162. At lysine 185 the chain carries N6-acetyllysine; alternate. Lysine 185 is subject to N6-succinyllysine; alternate. Substrate is bound at residue asparagine 215. Lysine 227 carries the N6-succinyllysine modification. Lysine 234 bears the N6-acetyllysine mark. N6-acetyllysine; alternate is present on residues lysine 279 and lysine 296. Lysine 279 is subject to N6-(pyridoxal phosphate)lysine; alternate. The residue at position 296 (lysine 296) is an N6-succinyllysine; alternate. N6-acetyllysine is present on lysine 302. Lysine 309 is subject to N6-acetyllysine; alternate. Position 309 is an N6-succinyllysine; alternate (lysine 309). Arginine 313 carries the asymmetric dimethylarginine modification. Lysine 338 bears the N6-acetyllysine; alternate mark. At lysine 338 the chain carries N6-succinyllysine; alternate. Lysine 345 is modified (N6-acetyllysine). Position 363 is an N6-acetyllysine; alternate (lysine 363). Lysine 363 is modified (N6-succinyllysine; alternate). Residues lysine 364 and lysine 387 each carry the N6-acetyllysine modification. 2 positions are modified to N6-acetyllysine; alternate: lysine 396 and lysine 404. Residues lysine 396 and lysine 404 each carry the N6-succinyllysine; alternate modification. Arginine 407 is a binding site for substrate.

The protein belongs to the class-I pyridoxal-phosphate-dependent aminotransferase family. As to quaternary structure, homodimer. Requires pyridoxal 5'-phosphate as cofactor. Expressed in all tissues tested: liver, pancreas, kidney, heart, spleen, arterioles, and lymphocytes.

It localises to the mitochondrion matrix. It is found in the cell membrane. It carries out the reaction L-aspartate + 2-oxoglutarate = oxaloacetate + L-glutamate. The catalysed reaction is L-kynurenine + 2-oxoglutarate = kynurenate + L-glutamate + H2O. Its function is as follows. Catalyzes the irreversible transamination of the L-tryptophan metabolite L-kynurenine to form kynurenic acid (KA). As a member of the malate-aspartate shuttle, it has a key role in the intracellular NAD(H) redox balance. Is important for metabolite exchange between mitochondria and cytosol, and for amino acid metabolism. Facilitates cellular uptake of long-chain free fatty acids. The sequence is that of Aspartate aminotransferase, mitochondrial (Got2) from Rattus norvegicus (Rat).